The chain runs to 295 residues: Glutenin, low molecular weight subunit PTDUCD1 (295 aa).

A signal peptide spans 1-20 (MKTFLVFALLAVVATSTIAQ). Positions 30-61 (ERPWQEQPLPPQHTLFPQQQPFPQQQQPPFSQ) are disordered. Low complexity predominate over residues 41 to 61 (QHTLFPQQQPFPQQQQPPFSQ).

The protein belongs to the gliadin/glutenin family. In terms of assembly, disulfide-bridge linked aggregates.

Functionally, glutenins are high-molecular weight seed storage proteins of wheat endosperm. Thought to be responsible for the visco-elastic property of wheat dough. This Triticum aestivum (Wheat) protein is Glutenin, low molecular weight subunit PTDUCD1.